A 97-amino-acid chain; its full sequence is Large ribosomal subunit protein eL30 (97 aa).

It belongs to the eukaryotic ribosomal protein eL30 family.

The chain is Large ribosomal subunit protein eL30 from Methanoregula boonei (strain DSM 21154 / JCM 14090 / 6A8).